The primary structure comprises 228 residues: Putative lipoprotein LprH (228 aa).

The signal sequence occupies residues 1–27; sequence MACLGRPGCRGWAGASLVLVVVLALAA. Cysteine 28 carries the N-palmitoyl cysteine lipid modification. Residue cysteine 28 is the site of S-diacylglycerol cysteine attachment. The helical transmembrane segment at 191–211 threads the bilayer; sequence GLAVVPHAVLVLSACGFKPGF.

It is found in the cell membrane. The chain is Putative lipoprotein LprH (lprH) from Mycobacterium bovis (strain ATCC BAA-935 / AF2122/97).